Here is a 94-residue protein sequence, read N- to C-terminus: MFTINAEVRKEQGKGASRRLRHANKFPAIVYGGTEAPVAIELDHDKVMNMQAKPEFYSEVLTLAIDGKEVKVKVQAVQRHPYKPKLHHIDFVRA.

This sequence belongs to the bacterial ribosomal protein bL25 family. Part of the 50S ribosomal subunit; part of the 5S rRNA/L5/L18/L25 subcomplex. Contacts the 5S rRNA. Binds to the 5S rRNA independently of L5 and L18.

Functionally, this is one of the proteins that binds to the 5S RNA in the ribosome where it forms part of the central protuberance. The chain is Large ribosomal subunit protein bL25 from Cronobacter sakazakii (strain ATCC BAA-894) (Enterobacter sakazakii).